We begin with the raw amino-acid sequence, 638 residues long: 1-deoxy-D-xylulose-5-phosphate synthase (638 aa).

Thiamine diphosphate contacts are provided by residues histidine 79 and 120–122; that span reads AHS. Aspartate 151 contributes to the Mg(2+) binding site. Thiamine diphosphate-binding positions include 152–153, asparagine 180, tyrosine 289, and glutamate 371; that span reads GA. Asparagine 180 contributes to the Mg(2+) binding site.

It belongs to the transketolase family. DXPS subfamily. In terms of assembly, homodimer. Mg(2+) is required as a cofactor. Thiamine diphosphate serves as cofactor.

The catalysed reaction is D-glyceraldehyde 3-phosphate + pyruvate + H(+) = 1-deoxy-D-xylulose 5-phosphate + CO2. The protein operates within metabolic intermediate biosynthesis; 1-deoxy-D-xylulose 5-phosphate biosynthesis; 1-deoxy-D-xylulose 5-phosphate from D-glyceraldehyde 3-phosphate and pyruvate: step 1/1. Functionally, catalyzes the acyloin condensation reaction between C atoms 2 and 3 of pyruvate and glyceraldehyde 3-phosphate to yield 1-deoxy-D-xylulose-5-phosphate (DXP). The chain is 1-deoxy-D-xylulose-5-phosphate synthase from Rhizobium johnstonii (strain DSM 114642 / LMG 32736 / 3841) (Rhizobium leguminosarum bv. viciae).